Here is a 66-residue protein sequence, read N- to C-terminus: Large ribosomal subunit protein bL32 (66 aa).

The interval 1 to 20 (MAVPKRRKSKSKVRTKRAHH) is disordered.

It belongs to the bacterial ribosomal protein bL32 family.

The chain is Large ribosomal subunit protein bL32 from Leptospira borgpetersenii serovar Hardjo-bovis (strain JB197).